Reading from the N-terminus, the 367-residue chain is DNA polymerase IV (367 aa).

Positions 14-198 constitute a UmuC domain; it reads IIHIDMDAFF…LPIEKFHGVG (185 aa). Asp18 and Asp116 together coordinate Mg(2+). Glu117 is a catalytic residue.

This sequence belongs to the DNA polymerase type-Y family. Monomer. Mg(2+) is required as a cofactor.

It localises to the cytoplasm. The enzyme catalyses DNA(n) + a 2'-deoxyribonucleoside 5'-triphosphate = DNA(n+1) + diphosphate. Poorly processive, error-prone DNA polymerase involved in untargeted mutagenesis. Copies undamaged DNA at stalled replication forks, which arise in vivo from mismatched or misaligned primer ends. These misaligned primers can be extended by PolIV. Exhibits no 3'-5' exonuclease (proofreading) activity. May be involved in translesional synthesis, in conjunction with the beta clamp from PolIII. This Streptococcus thermophilus (strain CNRZ 1066) protein is DNA polymerase IV.